The primary structure comprises 415 residues: Cell wall mannoprotein PIR3 (415 aa).

A signal peptide spans 1–18 (MQYKKPLVVSALAATSLA). Residues 19 to 67 (AYAPKDPWSTLTPSATYKGGITDYSSSFGIAIEAVATSASSVASSKAKR) constitute a propeptide that is removed on maturation. PIR1/2/3 repeat units lie at residues 66–84 (KRAASQIGDGQVQAATTTA), 92–109 (AAAVSQITDGQVQAAKST), 110–127 (AAAASQISDGQVQAAKST), 128–145 (AAAVSQITDGQVQAAKST), 146–163 (AAAVSQITDGQVQAAKST), 164–181 (AAAVSQITDGQVQAAKST), 182–199 (AAAVSQITDGQVQAAKST), 200–217 (AAAASQISDGQVQAAKST), 218–235 (AAAASQISDGQVQAAKST), 236–253 (AAAASQISDGQVQAAKST), 254–271 (AAAASQISDGQVQATTST), 272–288 (KAAASQITDGQIQASKT), and 289–307 (TSGASQVSDGQVQATAEVK).

This sequence belongs to the PIR protein family. In terms of processing, covalently linked to beta-1,3-glucan of the inner cell wall layer via an alkali-sensitive ester linkage between the gamma-carboxyl group of glutamic acids, arising from specific glutamines within the PIR1/2/3 repeats, and hydroxyl groups of glucoses of beta-1,3-glucan chains. O-glycosylated. Extensively O-mannosylated.

Its subcellular location is the secreted. It is found in the cell wall. Functionally, component of the outer cell wall layer. Required for stability of the cell wall and for optimal growth. Required for resistance against several antifungal and cell wall-perturbing agents. The protein is Cell wall mannoprotein PIR3 (PIR3) of Saccharomyces cerevisiae (strain YJM789) (Baker's yeast).